We begin with the raw amino-acid sequence, 204 residues long: Sperm acrosome developmental regulator (204 aa).

S65 bears the Phosphoserine mark. Over residues 172 to 184 (RRQERRRRHHLRA) the composition is skewed to basic residues. The interval 172 to 204 (RRQERRRRHHLRAHMGPQPDPAQGLKQDARSPL) is disordered.

It is found in the cytoplasmic vesicle. Its subcellular location is the secretory vesicle. It localises to the acrosome. Its function is as follows. May play an important role in acrosome formation and nucleus shaping during spermiogenesis. The protein is Sperm acrosome developmental regulator (SPACDR) of Bos taurus (Bovine).